Here is a 1167-residue protein sequence, read N- to C-terminus: Non-toxic nonhemagglutinin (1167 aa).

Positions 1 to 381 (MDIIDNVDIT…PQQIINLIDN (381 aa)) are light chain nLC. The interval 382–804 (NNILLIKSYI…LFNSKIQLTI (423 aa)) is N-heavy chain nHN. The segment at 805–1167 (KNEKPEYNLL…LNDIYSWTLI (363 aa)) is C-heavy chain nHC.

It belongs to the botulism non-toxic nonhemagglutinin family.

Expression of the ptox operon (ntnh-orfX1-orfX2-orfX3-pmp1) in B.thuringiensis kills Anopheles but not Aedes mosquito 3rd instar larvae. The ntnh-pmp1 construct is about half as toxic. This Paraclostridium bifermentans (Clostridium bifermentans) protein is Non-toxic nonhemagglutinin.